The following is a 318-amino-acid chain: MKKTKQPVIVLVGPTAVGKTKLSIHIAKAYNGEIISGDSMQIYKGMDIGTAKITSEEMDGVPHHLIDIKEPDESFSTAEFQQLVRMKIKEIAARGKTPMIVGGTGLYIQSVLYDYTFTDEKSDPAFREEMALFEQQHGPLQLHEKLKAVDPDAAKAIHPNNVRRVIRALEVIHTTGQKMSEMQNGHQEVPLYDTAFIGLKMDRELLYERIHQRIDMMIDEGLIEEVSALYQSGLKDCQSVQAIGYKELYTYFQGDCSLDEAIQQLKQNSRRYAKRQFTWFRNKMDVTWFDMTPPCHFSDKKEEIFAYIAGKLGLKAKL.

13-20 (GPTAVGKT) is an ATP binding site. 15–20 (TAVGKT) contributes to the substrate binding site. Residues 38-41 (DSMQ) form an interaction with substrate tRNA region.

The protein belongs to the IPP transferase family. As to quaternary structure, monomer. Mg(2+) is required as a cofactor.

The catalysed reaction is adenosine(37) in tRNA + dimethylallyl diphosphate = N(6)-dimethylallyladenosine(37) in tRNA + diphosphate. In terms of biological role, catalyzes the transfer of a dimethylallyl group onto the adenine at position 37 in tRNAs that read codons beginning with uridine, leading to the formation of N6-(dimethylallyl)adenosine (i(6)A). The protein is tRNA dimethylallyltransferase of Bacillus pumilus (strain SAFR-032).